The primary structure comprises 1080 residues: Presequence protease 1, chloroplastic/mitochondrial (1080 aa).

A chloroplast and mitochondrion-targeting transit peptide spans 1 to 85 (MLRTVSCLAS…GQFSRLSVRA (85 aa)). Val-86 carries the post-translational modification N-acetylvaline. Zn(2+) is bound at residue His-162. The active-site Proton acceptor is Glu-165. Residue His-166 coordinates Zn(2+). Residue Glu-240 is part of the active site. Glu-262 serves as a coordination point for Zn(2+). Residues 571–612 (EKATQEEVEEKNILEKVKAAMTEEDLAELARATEELKLKQET) adopt a coiled-coil conformation. Arg-705 serves as a coordination point for Mg(2+).

The protein belongs to the peptidase M16 family. PreP subfamily. As to quaternary structure, homodimer. Zn(2+) serves as cofactor. Requires Mg(2+) as cofactor. In terms of tissue distribution, expressed only in siliques and flowers.

The protein resides in the plastid. The protein localises to the chloroplast stroma. Its subcellular location is the mitochondrion matrix. With respect to regulation, inactive in the absence of MgCl(2) and CaCl(2) and full activation at 10 mM concentrations of either ion. Completely inhibited by the metal chelator orthophenanthroline, but not affected by phenylmethylsulfonyl fluoride (PMSF) or N-ethylmaleimide (NEM). Its function is as follows. ATP-independent protease that degrades both mitochondrial and chloroplastic transit peptides after their cleavage. Also degrades other unstructured peptides. Specific for peptides in the range of 10 to 65 residues. Shows a preference for cleavage after small polar residues and before basic residues, with a bias for positively charged amino acid residues. This is Presequence protease 1, chloroplastic/mitochondrial (PREP1) from Arabidopsis thaliana (Mouse-ear cress).